The sequence spans 2005 residues: Chitin synthase 8 (2005 aa).

The Myosin motor domain maps to 5–773 (DEVAKLSQLT…AFRELEDELR (769 aa)). Residue 108–115 (GDTSSGKS) participates in ATP binding. N-linked (GlcNAc...) asparagine glycosylation is found at N164, N364, N390, and N546. The interval 585–631 (QSVKPMRAPSTRRPNRGNTIKRTNTIKKADDDDSDEDAADAADASTS) is disordered. Positions 615-624 (DDDSDEDAAD) are enriched in acidic residues. Positions 647 to 669 (LDLLLETLEDTKTWFTLCLRPND) are actin-binding. A run of 2 helical transmembrane segments spans residues 929–949 (KWVA…LSRF) and 965–985 (LAIN…IVVL). N1076 is a glycosylation site (N-linked (GlcNAc...) asparagine). 3 helical membrane-spanning segments follow: residues 1232 to 1252 (ILLA…LAAL), 1604 to 1624 (LIFT…IVFI), and 1626 to 1646 (LLST…IVLV). N1650 carries an N-linked (GlcNAc...) asparagine glycan. Transmembrane regions (helical) follow at residues 1653–1673 (VPLT…VIFL) and 1680–1700 (MIGW…FLPL). Residues N1770 and N1794 are each glycosylated (N-linked (GlcNAc...) asparagine). Residues 1796–1821 (SFGHSPSPSYGGTPSQFGAFAPGPGS) form a disordered region. Positions 1797–1811 (FGHSPSPSYGGTPSQ) are enriched in polar residues. Residue N1882 is glycosylated (N-linked (GlcNAc...) asparagine). Residues 1912–1950 (FATAEQQQQQQQQQQAAGLSGSGGSKSPPREAVAGGLPS) form a disordered region. Residues 1917 to 1930 (QQQQQQQQQQAAGL) show a composition bias toward low complexity. In terms of domain architecture, DEK-C spans 1948-2003 (LPSDSQIKLDIRSLIAESDLTTITKKQLRAKLEQKYATSIESKKAFINSEIENVLS).

This sequence in the N-terminal section; belongs to the TRAFAC class myosin-kinesin ATPase superfamily. Myosin family. In the C-terminal section; belongs to the chitin synthase family. Class V subfamily.

It is found in the cell membrane. It localises to the cytoplasmic vesicle membrane. Its subcellular location is the cell tip. The enzyme catalyses [(1-&gt;4)-N-acetyl-beta-D-glucosaminyl](n) + UDP-N-acetyl-alpha-D-glucosamine = [(1-&gt;4)-N-acetyl-beta-D-glucosaminyl](n+1) + UDP + H(+). Polymerizes chitin, a structural polymer of the cell wall and septum, by transferring the sugar moiety of UDP-GlcNAc to the non-reducing end of the growing chitin polymer. Involved in mating tube and dikaryotic hyphae formation and required for the formation of invading hyphae during plant infection. In Mycosarcoma maydis (Corn smut fungus), this protein is Chitin synthase 8.